The following is a 659-amino-acid chain: MFQDNPLLAQLKQQIHDSKEQVEGVVKSTDKAYGFLECDKKTYFIAPPSMKKVMHGDKIKATIEKQGDKEQAEPEALIEPMLTRFIAKVRFNKDKKLQVLVDHPSINQPIGAQQAKSVKEELQEGDWVVANLKTHPLRDDRFFYATINQFICRADDELAPWWVTLARHEQSRYPVQGAEHYEMLDQKTRENLTALHFVTIDSESTMDMDDALYIEPIAQNSTQTGWKLVVAIADPTAYIALDSQIEQEAKQRCFTNYLPGFNIPMLPRELSDELCSLIANETRPALVCYIETDLAGNITAKPHFVSAYVQSKAKLAYNKVSDYLEQADNAWQPETPETAQQIHWLHQFTKARIQWHKTHSLLFKEKPDYAFVLAENGKVQEIKAEYRRIANQIVEEAMIIANICAAQFLHEQAKTGIFNTHSGFDKKFLENAHHFLMANLANEQNQTELAERYSVENLATLNGYCQMRHDIEPIESDYLELRLRRYLTFAEFKSELAPHFGLGLEGYATWTSPIRKYSDMVNHRLIKAVLAKQPYEKTQNDVLARLQEARRQNRLVERDIADWLYCRYLAPKVAENVEFNAEVQDVMRGGLRVQLLENGASMFIPASTLHNNKEEMQVNSDEIALYIKGERTYKIGDIVKVKLTEVKEATRSIVGEILQ.

The 343-residue stretch at R189–A531 folds into the RNB domain. One can recognise an S1 motif domain in the interval N576–L658.

The protein belongs to the RNR ribonuclease family. RNase II subfamily.

It localises to the cytoplasm. It catalyses the reaction Exonucleolytic cleavage in the 3'- to 5'-direction to yield nucleoside 5'-phosphates.. Its function is as follows. Involved in mRNA degradation. Hydrolyzes single-stranded polyribonucleotides processively in the 3' to 5' direction. In Haemophilus influenzae (strain 86-028NP), this protein is Exoribonuclease 2.